A 371-amino-acid polypeptide reads, in one-letter code: DNA primase large subunit PriL (371 aa).

4 residues coordinate [4Fe-4S] cluster: cysteine 230, cysteine 301, cysteine 310, and cysteine 317. The segment at 337-371 is disordered; it reads EREKEEGKEKGNEEKKEKREEHEKKNEKGNEIKEK.

Belongs to the eukaryotic-type primase large subunit family. As to quaternary structure, heterodimer of a small subunit (PriS) and a large subunit (PriL). The cofactor is [4Fe-4S] cluster.

Its function is as follows. Regulatory subunit of DNA primase, an RNA polymerase that catalyzes the synthesis of short RNA molecules used as primers for DNA polymerase during DNA replication. Stabilizes and modulates the activity of the small subunit, increasing the rate of DNA synthesis, and conferring RNA synthesis capability. The DNA polymerase activity may enable DNA primase to also catalyze primer extension after primer synthesis. May also play a role in DNA repair. The polypeptide is DNA primase large subunit PriL (Methanosarcina acetivorans (strain ATCC 35395 / DSM 2834 / JCM 12185 / C2A)).